The primary structure comprises 396 residues: tRNA-specific 2-thiouridylase MnmA (396 aa).

ATP-binding positions include 11–18 and M37; that span reads GLSGGVDS. Positions 97-99 are interaction with target base in tRNA; sequence NPD. Catalysis depends on C102, which acts as the Nucleophile. C102 and C225 form a disulfide bridge. ATP is bound at residue G126. The interval 175-177 is interaction with tRNA; the sequence is KDQ. Catalysis depends on C225, which acts as the Cysteine persulfide intermediate. Positions 343 to 344 are interaction with tRNA; that stretch reads RY.

It belongs to the MnmA/TRMU family.

Its subcellular location is the cytoplasm. The catalysed reaction is S-sulfanyl-L-cysteinyl-[protein] + uridine(34) in tRNA + AH2 + ATP = 2-thiouridine(34) in tRNA + L-cysteinyl-[protein] + A + AMP + diphosphate + H(+). Catalyzes the 2-thiolation of uridine at the wobble position (U34) of tRNA, leading to the formation of s(2)U34. The polypeptide is tRNA-specific 2-thiouridylase MnmA (Methylibium petroleiphilum (strain ATCC BAA-1232 / LMG 22953 / PM1)).